Consider the following 433-residue polypeptide: Amino-acid acetyltransferase (433 aa).

The N-acetyltransferase domain maps to 287-426 (ELVREAAIED…ASLYNYQRNS (140 aa)).

Belongs to the acetyltransferase family. ArgA subfamily.

It localises to the cytoplasm. The catalysed reaction is L-glutamate + acetyl-CoA = N-acetyl-L-glutamate + CoA + H(+). Its pathway is amino-acid biosynthesis; L-arginine biosynthesis; N(2)-acetyl-L-ornithine from L-glutamate: step 1/4. The sequence is that of Amino-acid acetyltransferase from Pseudomonas fluorescens (strain SBW25).